A 117-amino-acid chain; its full sequence is Photosystem II reaction center Psb28 protein (117 aa).

Belongs to the Psb28 family. In terms of assembly, part of the photosystem II complex.

It is found in the cellular thylakoid membrane. This is Photosystem II reaction center Psb28 protein from Prochlorococcus marinus (strain MIT 9312).